The primary structure comprises 208 residues: Pyridoxal 5'-phosphate synthase subunit PdxT (208 aa).

46 to 48 (GES) is a binding site for L-glutamine. Residue cysteine 78 is the Nucleophile of the active site. Residues arginine 105 and 156–157 (IR) each bind L-glutamine. Catalysis depends on charge relay system residues histidine 192 and glutamate 194.

The protein belongs to the glutaminase PdxT/SNO family. In terms of assembly, in the presence of PdxS, forms a dodecamer of heterodimers. Only shows activity in the heterodimer.

It carries out the reaction aldehydo-D-ribose 5-phosphate + D-glyceraldehyde 3-phosphate + L-glutamine = pyridoxal 5'-phosphate + L-glutamate + phosphate + 3 H2O + H(+). The enzyme catalyses L-glutamine + H2O = L-glutamate + NH4(+). The protein operates within cofactor biosynthesis; pyridoxal 5'-phosphate biosynthesis. Catalyzes the hydrolysis of glutamine to glutamate and ammonia as part of the biosynthesis of pyridoxal 5'-phosphate. The resulting ammonia molecule is channeled to the active site of PdxS. The chain is Pyridoxal 5'-phosphate synthase subunit PdxT from Bifidobacterium adolescentis (strain ATCC 15703 / DSM 20083 / NCTC 11814 / E194a).